Consider the following 747-residue polypeptide: DNA repair and recombination protein RAD54-like (747 aa).

Residues 1 to 42 (MRRSLAPSQLARRKPEDRSSDDEDWQPGTVTPKKRKSSSETQ) form a disordered region. Residues 2–9 (RRSLAPSQ) form a required for chromatin remodeling, strand pairing activities and coupling of ATPase activity region. S38 carries the phosphoserine modification. Positions 170-345 (SRRIPGSHGC…FSLVHFVNSG (176 aa)) constitute a Helicase ATP-binding domain. 183–190 (DEMGLGKT) lines the ATP pocket. The DEGH box signature appears at 296–299 (DEGH). The region spanning 500 to 653 (VLDYILAVTR…CVVDEEQDVE (154 aa)) is the Helicase C-terminal domain. The residue at position 515 (K515) is an N6-acetyllysine. At S572 the chain carries Phosphoserine; by NEK1.

This sequence belongs to the SNF2/RAD54 helicase family. As to quaternary structure, homohexamer. Interacts (via N-terminus) with RAD51. Interacts with NAP1L1. Interacts with BRD9; this interaction orchestrates RAD51-RAD54 complex formation. Acetylated. Acetylation promotes interaction with BRD9, and subsequently with RAD54, which is essential for homologous recombination (HR). In terms of processing, phosphorylated. Phosphorylation at Ser-572 by NEK1 specifically in G2 phase allows efficient removal of RAD51 filaments from DNA. Hardly detectable in most tissues. Dramatically increased in thymus, spleen and testis.

Its subcellular location is the nucleus. The enzyme catalyses ATP + H2O = ADP + phosphate + H(+). Functionally, plays an essential role in homologous recombination (HR) which is a major pathway for repairing DNA double-strand breaks (DSBs), single-stranded DNA (ssDNA) gaps, and stalled or collapsed replication forks. Acts as a molecular motor during the homology search and guides RAD51 ssDNA along a donor dsDNA thereby changing the homology search from the diffusion-based mechanism to a motor-guided mechanism. Plays also an essential role in RAD51-mediated synaptic complex formation which consists of three strands encased in a protein filament formed once homology is recognized. Once DNA strand exchange occured, dissociates RAD51 from nucleoprotein filaments formed on dsDNA. Deficiency also resulted in an increased frequency of end-to-end chromosome fusions involving telomeres compared to the controls, suggesting a putative role in telomere capping. Non-homologous end joining (NHEJ) and homologous recombination (HR) represent the two major pathways of DNA double-strand break (DSB) repair in eukaryotic cells. LIG4 and RAD54L cooperate to support cellular proliferation, repair spontaneous DSBs, and prevent chromosome and single chromatid aberrations. The sequence is that of DNA repair and recombination protein RAD54-like (Rad54l) from Mus musculus (Mouse).